The sequence spans 362 residues: Uroporphyrinogen decarboxylase (362 aa).

Residues R39–R43, D88, Y165, T220, and H334 each bind substrate.

It belongs to the uroporphyrinogen decarboxylase family. Homodimer.

It is found in the cytoplasm. The catalysed reaction is uroporphyrinogen III + 4 H(+) = coproporphyrinogen III + 4 CO2. The protein operates within porphyrin-containing compound metabolism; protoporphyrin-IX biosynthesis; coproporphyrinogen-III from 5-aminolevulinate: step 4/4. Functionally, catalyzes the decarboxylation of four acetate groups of uroporphyrinogen-III to yield coproporphyrinogen-III. This Synechococcus sp. (strain JA-3-3Ab) (Cyanobacteria bacterium Yellowstone A-Prime) protein is Uroporphyrinogen decarboxylase.